We begin with the raw amino-acid sequence, 438 residues long: Mannose-1-phosphate guanylyltransferase regulatory subunit alpha (438 aa).

A substrate-binding domain region spans residues 2-260; the sequence is LKAVILIGGP…PNWWSQLKTA (259 aa). GDP-alpha-D-mannose-binding residues include glutamate 87 and glutamine 256. The segment at 282 to 438 is hexapeptide repeat domain; the sequence is LANVGIKRGE…SRSFKNEIIL (157 aa). A C-loop region spans residues 373 to 402; it reads TPSDPDPNKPFAKMENPPLFNNEGKLNPSI.

The protein belongs to the transferase hexapeptide repeat family. Component of the GMPPA-GMPPB mannose-1-phosphate guanylyltransferase complex composed of 4 GMPPA subunits and 8 GMPPB subunits; the complex is organized into three layers, a central layer made up of 2 GMPPA dimers sandwiched between two layers each made up of 2 GMPPB dimers.

Regulatory subunit of the GMPPA-GMPPB mannose-1-phosphate guanylyltransferase complex; reduces the catalytic activity of GMPPB when part of the complex. Mediates allosteric feedback inhibition of GMPPB catalytic activity upon binding GDP-alpha-D-mannose. Together with GMPPB regulates GDP-alpha-D-mannose levels. This chain is Mannose-1-phosphate guanylyltransferase regulatory subunit alpha, found in Drosophila melanogaster (Fruit fly).